The primary structure comprises 332 residues: 3-ketodihydrosphingosine reductase (332 aa).

Residues 1-25 (MLLLAAASLVAFVLLLYMVSPLISP) form the signal peptide. Residues 26–269 (KPLALPGAHV…QGNFNSSIGS (244 aa)) lie on the Cytoplasmic side of the membrane. Glycine 39, serine 41, serine 42, glycine 43, arginine 64, lysine 68, and aspartate 93 together coordinate NADPH. The GXSXG motif lies at 39–43 (GGSSG). Serine 172 acts as the Proton donor in catalysis. Tyrosine 186 (proton acceptor) is an active-site residue. The NADP(+) site is built by tyrosine 186 and lysine 190. Residue lysine 190 is the Lowers pKa of active site Tyr of the active site. The helical transmembrane segment at 270-290 (DGYMLSSLTCGMAPVTSIMEG) threads the bilayer. The Lumenal segment spans residues 291–292 (LQ). A helical transmembrane segment spans residues 293-313 (QVVTMGLFRTIALFYLGSFDS). The Cytoplasmic portion of the chain corresponds to 314 to 331 (IVRRCMMQKAKLETVDKT).

It belongs to the short-chain dehydrogenases/reductases (SDR) family.

Its subcellular location is the endoplasmic reticulum membrane. The catalysed reaction is sphinganine + NADP(+) = 3-oxosphinganine + NADPH + H(+). The protein operates within lipid metabolism; sphingolipid metabolism. Catalyzes the reduction of 3'-oxosphinganine (3-ketodihydrosphingosine/KDS) to sphinganine (dihydrosphingosine/DHS), the second step of de novo sphingolipid biosynthesis. The sequence is that of 3-ketodihydrosphingosine reductase (KDSR) from Bos taurus (Bovine).